Here is a 243-residue protein sequence, read N- to C-terminus: 23S rRNA (guanosine-2'-O-)-methyltransferase RlmB (243 aa).

The S-adenosyl-L-methionine site is built by Gly196, Ile216, and Leu225.

This sequence belongs to the class IV-like SAM-binding methyltransferase superfamily. RNA methyltransferase TrmH family. RlmB subfamily. As to quaternary structure, homodimer.

The protein localises to the cytoplasm. The enzyme catalyses guanosine(2251) in 23S rRNA + S-adenosyl-L-methionine = 2'-O-methylguanosine(2251) in 23S rRNA + S-adenosyl-L-homocysteine + H(+). Specifically methylates the ribose of guanosine 2251 in 23S rRNA. In Salmonella typhimurium (strain LT2 / SGSC1412 / ATCC 700720), this protein is 23S rRNA (guanosine-2'-O-)-methyltransferase RlmB.